A 356-amino-acid chain; its full sequence is Fe(3+) ions import ATP-binding protein FbpC 2 (356 aa).

The 235-residue stretch at 12–246 (LTVKNLNKFF…PNHLETAKFM (235 aa)) folds into the ABC transporter domain. An ATP-binding site is contributed by 44 to 51 (GSSGCGKT).

This sequence belongs to the ABC transporter superfamily. Fe(3+) ion importer (TC 3.A.1.10) family. The complex is composed of two ATP-binding proteins (FbpC), two transmembrane proteins (FbpB) and a solute-binding protein (FbpA).

The protein localises to the cell inner membrane. The enzyme catalyses Fe(3+)(out) + ATP + H2O = Fe(3+)(in) + ADP + phosphate + H(+). In terms of biological role, part of the ABC transporter complex FbpABC involved in Fe(3+) ions import. Responsible for energy coupling to the transport system. The protein is Fe(3+) ions import ATP-binding protein FbpC 2 of Haemophilus influenzae (strain ATCC 51907 / DSM 11121 / KW20 / Rd).